Here is a 93-residue protein sequence, read N- to C-terminus: UPF0728 protein C10orf53 (93 aa).

Belongs to the UPF0728 family.

This Homo sapiens (Human) protein is UPF0728 protein C10orf53 (C10orf53).